The chain runs to 245 residues: Phosphoribosyl isomerase A (245 aa).

D11 functions as the Proton acceptor in the catalytic mechanism. D130 acts as the Proton donor in catalysis.

Belongs to the HisA/HisF family.

The protein resides in the cytoplasm. The catalysed reaction is 1-(5-phospho-beta-D-ribosyl)-5-[(5-phospho-beta-D-ribosylamino)methylideneamino]imidazole-4-carboxamide = 5-[(5-phospho-1-deoxy-D-ribulos-1-ylimino)methylamino]-1-(5-phospho-beta-D-ribosyl)imidazole-4-carboxamide. It carries out the reaction N-(5-phospho-beta-D-ribosyl)anthranilate = 1-(2-carboxyphenylamino)-1-deoxy-D-ribulose 5-phosphate. The protein operates within amino-acid biosynthesis; L-histidine biosynthesis; L-histidine from 5-phospho-alpha-D-ribose 1-diphosphate: step 4/9. Its pathway is amino-acid biosynthesis; L-tryptophan biosynthesis; L-tryptophan from chorismate: step 3/5. Its function is as follows. Involved in both the histidine and tryptophan biosynthetic pathways. The sequence is that of Phosphoribosyl isomerase A (priA) from Mycobacterium bovis (strain ATCC BAA-935 / AF2122/97).